A 127-amino-acid chain; its full sequence is Small ribosomal subunit protein eS6 (127 aa).

The protein belongs to the eukaryotic ribosomal protein eS6 family.

In Picrophilus torridus (strain ATCC 700027 / DSM 9790 / JCM 10055 / NBRC 100828 / KAW 2/3), this protein is Small ribosomal subunit protein eS6.